A 190-amino-acid polypeptide reads, in one-letter code: Protein hunchback (190 aa).

Disordered stretches follow at residues 13–59, 86–110, and 142–190; these read EPMS…SSNL, AAMT…PNPM, and QTND…KYMA. Over residues 17–31 the composition is skewed to basic residues; sequence HHHHHSHHHGHHHML. A compositionally biased stretch (polar residues) spans 90-100; sequence PSPSNNDQNSP. Residues 171–190 show a composition bias toward basic and acidic residues; it reads EPEKDHDLISNSSEDMKYMA.

Belongs to the hunchback C2H2-type zinc-finger protein family.

It localises to the nucleus. Gap class segmentation protein that controls development of head structures. The protein is Protein hunchback (hb) of Scaptomyza crassifemur (Fruit fly).